Here is a 70-residue protein sequence, read N- to C-terminus: MIFKVFYQEKMTEVPVRENTKVLYLEATSEKDVRTKLNKFAYNIEFVQSVTGNHLEYEKANADLTLAEIV.

The protein belongs to the RNA polymerase subunit epsilon family. RNAP is composed of a core of 2 alpha, a beta and a beta' subunit. The core is associated with a delta subunit, and at least one of epsilon or omega. When a sigma factor is associated with the core the holoenzyme is formed, which can initiate transcription.

It carries out the reaction RNA(n) + a ribonucleoside 5'-triphosphate = RNA(n+1) + diphosphate. Functionally, a non-essential component of RNA polymerase (RNAP). The chain is DNA-directed RNA polymerase subunit epsilon from Bacillus cereus (strain ZK / E33L).